Here is a 307-residue protein sequence, read N- to C-terminus: Ribonuclease Z (307 aa).

The Zn(2+) site is built by histidine 61, histidine 63, aspartate 65, histidine 66, histidine 138, aspartate 208, and histidine 264. Aspartate 65 (proton acceptor) is an active-site residue.

It belongs to the RNase Z family. In terms of assembly, homodimer. Requires Zn(2+) as cofactor.

It carries out the reaction Endonucleolytic cleavage of RNA, removing extra 3' nucleotides from tRNA precursor, generating 3' termini of tRNAs. A 3'-hydroxy group is left at the tRNA terminus and a 5'-phosphoryl group is left at the trailer molecule.. Functionally, zinc phosphodiesterase, which displays some tRNA 3'-processing endonuclease activity. Probably involved in tRNA maturation, by removing a 3'-trailer from precursor tRNA. In Pyrococcus horikoshii (strain ATCC 700860 / DSM 12428 / JCM 9974 / NBRC 100139 / OT-3), this protein is Ribonuclease Z.